A 174-amino-acid polypeptide reads, in one-letter code: Large ribosomal subunit protein uL16 (174 aa).

The protein belongs to the universal ribosomal protein uL16 family.

This Staphylothermus marinus (strain ATCC 43588 / DSM 3639 / JCM 9404 / F1) protein is Large ribosomal subunit protein uL16.